The chain runs to 489 residues: EGF-like domain-containing protein 2 (489 aa).

The N-terminal stretch at 1–23 (MMQTLLRGLCVVVLFWGYIKASA) is a signal peptide. The 37-residue stretch at 73–109 (PATLCDPPCLNGGQCFEPTADTYMCMCSEAFYGSQCE) folds into the EGF-like domain. 3 disulfide bridges follow: cysteine 77-cysteine 87, cysteine 81-cysteine 97, and cysteine 99-cysteine 108. In terms of domain architecture, ZP spans 116–370 (ECSGDQITIN…GSCPTPAPPA (255 aa)). An N-linked (GlcNAc...) asparagine glycan is attached at asparagine 229. 2 disordered regions span residues 358 to 389 (CEPGSCPTPAPPAPVQPTPSENPGRKRRAASD) and 404 to 425 (RSNEKLRLPHNKSDKKSQQNAD). Residues 363–374 (CPTPAPPAPVQP) are compositionally biased toward pro residues. Residues 404 to 420 (RSNEKLRLPHNKSDKKS) show a composition bias toward basic and acidic residues. 2 N-linked (GlcNAc...) asparagine glycosylation sites follow: asparagine 414 and asparagine 479.

Component of the acid-insoluble organic matrix of calcified layers of the shell (at protein level).

It is found in the secreted. In Lottia gigantea (Giant owl limpet), this protein is EGF-like domain-containing protein 2.